A 315-amino-acid polypeptide reads, in one-letter code: MQIKLANPRGFCAGVDRAIEIVNRALEVFGPPIYVRHEVVHNKFVVEDLRNRGAIFVEELDQVPDDVIVIFSAHGVSQAVRQEAAGRGLKVFDATCPLVTKVHIEVAKYSRDGRECILIGHEGHPEVEGTMGQYDASNGGAIYLVEDEEDVANLQVRDPDHLAFVTQTTLSMDDTSRVIDALRARFPNIGGPRKDDICYATQNRQDAVKQLAGESDVVLVVGSPNSSNSNRLRELAERMGTPAYLIDGAEDLQRGWFDQAARIGITAGASAPEVLVRGVIEQLKAWGATGAEELDGREENITFSMPKELRVRSLI.

A [4Fe-4S] cluster-binding site is contributed by Cys-12. Residues His-41 and His-74 each coordinate (2E)-4-hydroxy-3-methylbut-2-enyl diphosphate. 2 residues coordinate dimethylallyl diphosphate: His-41 and His-74. The isopentenyl diphosphate site is built by His-41 and His-74. Residue Cys-96 coordinates [4Fe-4S] cluster. His-124 is a (2E)-4-hydroxy-3-methylbut-2-enyl diphosphate binding site. Position 124 (His-124) interacts with dimethylallyl diphosphate. His-124 lines the isopentenyl diphosphate pocket. Glu-126 serves as the catalytic Proton donor. Thr-168 is a binding site for (2E)-4-hydroxy-3-methylbut-2-enyl diphosphate. Cys-198 provides a ligand contact to [4Fe-4S] cluster. (2E)-4-hydroxy-3-methylbut-2-enyl diphosphate contacts are provided by Ser-226, Ser-227, Asn-228, and Ser-270. Dimethylallyl diphosphate-binding residues include Ser-226, Ser-227, Asn-228, and Ser-270. The isopentenyl diphosphate site is built by Ser-226, Ser-227, Asn-228, and Ser-270.

This sequence belongs to the IspH family. It depends on [4Fe-4S] cluster as a cofactor.

The catalysed reaction is isopentenyl diphosphate + 2 oxidized [2Fe-2S]-[ferredoxin] + H2O = (2E)-4-hydroxy-3-methylbut-2-enyl diphosphate + 2 reduced [2Fe-2S]-[ferredoxin] + 2 H(+). The enzyme catalyses dimethylallyl diphosphate + 2 oxidized [2Fe-2S]-[ferredoxin] + H2O = (2E)-4-hydroxy-3-methylbut-2-enyl diphosphate + 2 reduced [2Fe-2S]-[ferredoxin] + 2 H(+). Its pathway is isoprenoid biosynthesis; dimethylallyl diphosphate biosynthesis; dimethylallyl diphosphate from (2E)-4-hydroxy-3-methylbutenyl diphosphate: step 1/1. It participates in isoprenoid biosynthesis; isopentenyl diphosphate biosynthesis via DXP pathway; isopentenyl diphosphate from 1-deoxy-D-xylulose 5-phosphate: step 6/6. Functionally, catalyzes the conversion of 1-hydroxy-2-methyl-2-(E)-butenyl 4-diphosphate (HMBPP) into a mixture of isopentenyl diphosphate (IPP) and dimethylallyl diphosphate (DMAPP). Acts in the terminal step of the DOXP/MEP pathway for isoprenoid precursor biosynthesis. The protein is 4-hydroxy-3-methylbut-2-enyl diphosphate reductase of Pseudomonas putida (strain GB-1).